The sequence spans 534 residues: H(+)/hexose cotransporter 1 (534 aa).

Residues 1 to 21 (MAGGGVVVVSGRGLSTGDYRG) lie on the Cytoplasmic side of the membrane. Residues 22–42 (GLTVYVVMVAFMAACGGLLLG) traverse the membrane as a helical segment. Over 43 to 87 (YDNGVTGGVVSLEAFEKKFFPDVWAKKQEVHEDSPYCTYDNAKLQ) the chain is Extracellular. The chain crosses the membrane as a helical span at residues 88–108 (LFVSSLFLAGLVSCLFASWIT). The Cytoplasmic segment spans residues 109–114 (RNWGRK). A helical transmembrane segment spans residues 115–135 (VTMGIGGAFFVAGGLVNAFAQ). At 136–144 (DMAMLIVGR) the chain is on the extracellular side. A helical transmembrane segment spans residues 145–165 (VLLGFGVGLGSQVVPQYLSEV). Topologically, residues 166 to 173 (APFSHRGM) are cytoplasmic. A helical membrane pass occupies residues 174–194 (LNIGYQLFVTIGILIAGLVNY). The Extracellular portion of the chain corresponds to 195–204 (AVRDWENGWR). A helical membrane pass occupies residues 205-225 (LSLGPAAAPGAILFLGSLVLP). Residues 226-299 (ESPNFLVEKG…TSFVIQFFQQ (74 aa)) lie on the Cytoplasmic side of the membrane. The chain crosses the membrane as a helical span at residues 300–322 (FTGINAIIFYVPVLFSSLGSANS). Residues 323 to 328 (AALLNT) lie on the Extracellular side of the membrane. The chain crosses the membrane as a helical span at residues 329–349 (VVVGAVNVGSTLIAVMFSDKF). At 350–352 (GRR) the chain is on the cytoplasmic side. A helical membrane pass occupies residues 353-373 (FLLIEGGIQCCLAMLTTGVVL). Topologically, residues 374-387 (AIEFAKYGTDPLPK) are extracellular. A helical transmembrane segment spans residues 388 to 408 (AVASGILAVICIFISGFAWSW). Residues 409 to 433 (GPMGWLIPSEIFTLETRPAGTAVAV) are Cytoplasmic-facing. A helical transmembrane segment spans residues 434-454 (VGNFLFSFVIGQAFVSMLCAM). At 455–456 (EY) the chain is on the extracellular side. Residues 457–477 (GVFLFFAGWLVIMVLCAIFLL) form a helical membrane-spanning segment. Residues 478-534 (PETKGVPIERVQALYARHWFWNRVMGPAAAEVIAEDEKRVAAASAIIKEEELSKAMK) lie on the Cytoplasmic side of the membrane.

It belongs to the major facilitator superfamily. Sugar transporter (TC 2.A.1.1) family.

The protein resides in the membrane. Active uptake of hexoses. The sequence is that of H(+)/hexose cotransporter 1 (HUP1) from Parachlorella kessleri (Green alga).